Reading from the N-terminus, the 314-residue chain is uncharacterized protein (314 aa).

2 consecutive transmembrane segments (helical) span residues 23 to 43 (LALG…MALF) and 98 to 118 (MASG…GPLT). Positions 165–184 (GLGSGAGGGDVGGGGAGGTT) are enriched in gly residues. A disordered region spans residues 165-314 (GLGSGAGGGD…APDEKTDAGE (150 aa)). The span at 190–202 (GPPPVPTSSPPTT) shows a compositional bias: pro residues. Composition is skewed to low complexity over residues 203-212 (PAGAPTKSAT) and 219-232 (ASPA…AGMP). A helical transmembrane segment spans residues 221 to 241 (PASAHMGAAGMPMVPPGAMGA). Basic and acidic residues predominate over residues 294 to 314 (LLPEHKDFGRIAPDEKTDAGE).

It is found in the cell membrane. This is an uncharacterized protein from Mycobacterium tuberculosis (strain CDC 1551 / Oshkosh).